A 336-amino-acid polypeptide reads, in one-letter code: Nuclear envelope-associated protein 3 (336 aa).

Coiled-coil stretches lie at residues Leu-14–Ser-87 and Val-128–Lys-261. A Bipartite nuclear localization signal motif is present at residues Lys-240–Lys-261. Residues Leu-313–Leu-330 form a helical membrane-spanning segment.

Forms homomers and heteromers with NEAP1 and NEAP2. Interacts with SUN1 and SUN2.

It is found in the nucleus inner membrane. The protein resides in the nucleus. The protein localises to the nucleoplasm. The protein is Nuclear envelope-associated protein 3 of Arabidopsis thaliana (Mouse-ear cress).